A 421-amino-acid polypeptide reads, in one-letter code: Testin (421 aa).

The PET domain maps to 92 to 199 (MILTNPVPAK…GDVKLPSEMD (108 aa)). Positions 135 to 165 (QPVAGSEGAQYRKKQLAKQLPEHDQDPSKCH) are disordered. Over residues 154-165 (LPEHDQDPSKCH) the composition is skewed to basic and acidic residues. LIM zinc-binding domains follow at residues 234–297 (YSCY…CDSE), 299–359 (PRCA…NHAV), and 362–421 (QGCH…KMMS).

The protein belongs to the prickle / espinas / testin family. As to quaternary structure, interacts via LIM domain 1 with ZYX. Interacts (via LIM domain 3) with ENAH and VASP. Interacts with ALKBH4, talin, actin, alpha-actinin, GRIP1 and PXN. Interacts (via LIM domain 2) with ACTL7A (via N-terminus). Heterodimer with ACTL7A; the heterodimer interacts with ENAH to form a heterotrimer.

The protein resides in the cytoplasm. It localises to the cell junction. It is found in the focal adhesion. In terms of biological role, scaffold protein that may play a role in cell adhesion, cell spreading and in the reorganization of the actin cytoskeleton. Plays a role in the regulation of cell proliferation. May act as a tumor suppressor. In Dasypus novemcinctus (Nine-banded armadillo), this protein is Testin (TES).